The following is a 227-amino-acid chain: Cytochrome c oxidase subunit 2 (227 aa).

Over 1–14 (MAYPFQLGLQDATS) the chain is Mitochondrial intermembrane. Residues 15-45 (PIMEELLHFHDHTLMIVFLISSLVLYIISSM) traverse the membrane as a helical segment. The Mitochondrial matrix portion of the chain corresponds to 46–59 (LTTKLTHTSTMDAQ). The helical transmembrane segment at 60–87 (EVETVWTILPAIILVLIALPSLRILYMM) threads the bilayer. Residues 88–227 (DETNNPSLTV…YFETWSALMV (140 aa)) are Mitochondrial intermembrane-facing. Residues His-161, Cys-196, Glu-198, Cys-200, His-204, and Met-207 each coordinate Cu cation. Glu-198 provides a ligand contact to Mg(2+). The residue at position 218 (Tyr-218) is a Phosphotyrosine.

Belongs to the cytochrome c oxidase subunit 2 family. As to quaternary structure, component of the cytochrome c oxidase (complex IV, CIV), a multisubunit enzyme composed of 14 subunits. The complex is composed of a catalytic core of 3 subunits MT-CO1, MT-CO2 and MT-CO3, encoded in the mitochondrial DNA, and 11 supernumerary subunits COX4I, COX5A, COX5B, COX6A, COX6B, COX6C, COX7A, COX7B, COX7C, COX8 and NDUFA4, which are encoded in the nuclear genome. The complex exists as a monomer or a dimer and forms supercomplexes (SCs) in the inner mitochondrial membrane with NADH-ubiquinone oxidoreductase (complex I, CI) and ubiquinol-cytochrome c oxidoreductase (cytochrome b-c1 complex, complex III, CIII), resulting in different assemblies (supercomplex SCI(1)III(2)IV(1) and megacomplex MCI(2)III(2)IV(2)). Found in a complex with TMEM177, COA6, COX18, COX20, SCO1 and SCO2. Interacts with TMEM177 in a COX20-dependent manner. Interacts with COX20. Interacts with COX16. Requires Cu cation as cofactor.

It localises to the mitochondrion inner membrane. The enzyme catalyses 4 Fe(II)-[cytochrome c] + O2 + 8 H(+)(in) = 4 Fe(III)-[cytochrome c] + 2 H2O + 4 H(+)(out). Component of the cytochrome c oxidase, the last enzyme in the mitochondrial electron transport chain which drives oxidative phosphorylation. The respiratory chain contains 3 multisubunit complexes succinate dehydrogenase (complex II, CII), ubiquinol-cytochrome c oxidoreductase (cytochrome b-c1 complex, complex III, CIII) and cytochrome c oxidase (complex IV, CIV), that cooperate to transfer electrons derived from NADH and succinate to molecular oxygen, creating an electrochemical gradient over the inner membrane that drives transmembrane transport and the ATP synthase. Cytochrome c oxidase is the component of the respiratory chain that catalyzes the reduction of oxygen to water. Electrons originating from reduced cytochrome c in the intermembrane space (IMS) are transferred via the dinuclear copper A center (CU(A)) of subunit 2 and heme A of subunit 1 to the active site in subunit 1, a binuclear center (BNC) formed by heme A3 and copper B (CU(B)). The BNC reduces molecular oxygen to 2 water molecules using 4 electrons from cytochrome c in the IMS and 4 protons from the mitochondrial matrix. This chain is Cytochrome c oxidase subunit 2 (MT-CO2), found in Chrysocyon brachyurus (Maned wolf).